Reading from the N-terminus, the 126-residue chain is Large ribosomal subunit protein bL12 (126 aa).

Belongs to the bacterial ribosomal protein bL12 family. In terms of assembly, homodimer. Part of the ribosomal stalk of the 50S ribosomal subunit. Forms a multimeric L10(L12)X complex, where L10 forms an elongated spine to which 2 to 4 L12 dimers bind in a sequential fashion. Binds GTP-bound translation factors.

Functionally, forms part of the ribosomal stalk which helps the ribosome interact with GTP-bound translation factors. Is thus essential for accurate translation. This is Large ribosomal subunit protein bL12 from Beijerinckia indica subsp. indica (strain ATCC 9039 / DSM 1715 / NCIMB 8712).